Reading from the N-terminus, the 248-residue chain is 3-deoxy-manno-octulosonate cytidylyltransferase (248 aa).

Belongs to the KdsB family.

It localises to the cytoplasm. The catalysed reaction is 3-deoxy-alpha-D-manno-oct-2-ulosonate + CTP = CMP-3-deoxy-beta-D-manno-octulosonate + diphosphate. It participates in nucleotide-sugar biosynthesis; CMP-3-deoxy-D-manno-octulosonate biosynthesis; CMP-3-deoxy-D-manno-octulosonate from 3-deoxy-D-manno-octulosonate and CTP: step 1/1. It functions in the pathway bacterial outer membrane biogenesis; lipopolysaccharide biosynthesis. Activates KDO (a required 8-carbon sugar) for incorporation into bacterial lipopolysaccharide in Gram-negative bacteria. The polypeptide is 3-deoxy-manno-octulosonate cytidylyltransferase (Salmonella typhi).